The sequence spans 202 residues: Dephospho-CoA kinase (202 aa).

The DPCK domain maps to 6 to 202; it reads KISVTGDPSS…QCFKALKGTI (197 aa). 14-19 contributes to the ATP binding site; it reads SSGKTE.

The protein belongs to the CoaE family.

It localises to the cytoplasm. It catalyses the reaction 3'-dephospho-CoA + ATP = ADP + CoA + H(+). Its pathway is cofactor biosynthesis; coenzyme A biosynthesis; CoA from (R)-pantothenate: step 5/5. In terms of biological role, catalyzes the phosphorylation of the 3'-hydroxyl group of dephosphocoenzyme A to form coenzyme A. This Chlamydia trachomatis serovar D (strain ATCC VR-885 / DSM 19411 / UW-3/Cx) protein is Dephospho-CoA kinase.